A 320-amino-acid polypeptide reads, in one-letter code: Replication-associated protein ORF2 (320 aa).

Active-site O-(5'-phospho-DNA)-tyrosine intermediate residues include tyrosine 188 and tyrosine 192.

This sequence belongs to the microviridae Rep protein family.

It carries out the reaction ATP + (deoxyribonucleotide)n-3'-hydroxyl + 5'-phospho-(deoxyribonucleotide)m = (deoxyribonucleotide)n+m + AMP + diphosphate.. Functionally, plays an essential role in viral DNA replication. Binds the origin of replication and cleaves the dsDNA replicative form I (RFI) and becomes covalently bound to it via phosphotyrosine bond, generating the dsDNA replicative form II (RFII). In turn, viral DNA replication initiates at the 3'-OH of the cleavage site. After one round of rolling circle synthesis, protein ORF2 is linked to the newly synthesized ssDNA and joins the ends of the displaced strand to generate a circular single-stranded molecule ready to be packed into a virion. In Spiroplasma virus 4 (SpV4), this protein is Replication-associated protein ORF2.